Here is a 252-residue protein sequence, read N- to C-terminus: Transcriptional regulatory protein HptR (252 aa).

A Response regulatory domain is found at 3-118; it reads KVVICDDERI…QLEVILGRLV (116 aa). Asp55 bears the 4-aspartylphosphate mark. The HTH araC/xylS-type domain maps to 153–250; it reads NQIVDQIKQS…QMSPSDYCKQ (98 aa). 2 consecutive DNA-binding regions (H-T-H motif) follow at residues 170-191 and 217-240; these read SDLIQHIDVSESYAMRTFKDHV and HYEIADKVGFSEYKMFSYHFKKYL.

Phosphorylated by HptS.

The protein localises to the cytoplasm. Its function is as follows. Member of the two-component regulatory system HptS/HptR that regulates genes involved in hexose phosphate transport system in response to changes in extracellular phosphate sources. Activates uhpT expression to facilitate glucose-6-phosphate/G6P utilization by directly binding to its promoter. Antagonizes CcpA-dependent transcription of a subset of CcpA-regulated genes involved in antibiotic susceptibility. The polypeptide is Transcriptional regulatory protein HptR (hptR) (Staphylococcus aureus (strain MRSA252)).